Consider the following 75-residue polypeptide: uncharacterized protein (75 aa).

The next 2 helical transmembrane spans lie at 5-25 and 42-62; these read VIICLLFTYYVIWSLLPIFEI and VAIFLPIFLLLIGFTLTGSVL.

The protein resides in the membrane. This is an uncharacterized protein from Saccharomyces cerevisiae (strain ATCC 204508 / S288c) (Baker's yeast).